The primary structure comprises 469 residues: Aspartyl/glutamyl-tRNA(Asn/Gln) amidotransferase subunit B (469 aa).

Belongs to the GatB/GatE family. GatB subfamily. Heterotrimer of A, B and C subunits.

The enzyme catalyses L-glutamyl-tRNA(Gln) + L-glutamine + ATP + H2O = L-glutaminyl-tRNA(Gln) + L-glutamate + ADP + phosphate + H(+). It catalyses the reaction L-aspartyl-tRNA(Asn) + L-glutamine + ATP + H2O = L-asparaginyl-tRNA(Asn) + L-glutamate + ADP + phosphate + 2 H(+). Functionally, allows the formation of correctly charged Asn-tRNA(Asn) or Gln-tRNA(Gln) through the transamidation of misacylated Asp-tRNA(Asn) or Glu-tRNA(Gln) in organisms which lack either or both of asparaginyl-tRNA or glutaminyl-tRNA synthetases. The reaction takes place in the presence of glutamine and ATP through an activated phospho-Asp-tRNA(Asn) or phospho-Glu-tRNA(Gln). The sequence is that of Aspartyl/glutamyl-tRNA(Asn/Gln) amidotransferase subunit B from Methanococcus aeolicus (strain ATCC BAA-1280 / DSM 17508 / OCM 812 / Nankai-3).